We begin with the raw amino-acid sequence, 1832 residues long: Zinc finger SWIM domain-containing protein 8 (1832 aa).

Phosphoserine is present on residues serine 36, serine 48, and serine 53. A disordered region spans residues 45–67 (RKQSAGPNSPTGGGGGGGSGGTR). Over residues 55-65 (TGGGGGGGSGG) the composition is skewed to gly residues. The SWIM-type zinc-finger motif lies at 172–208 (YNVAVMFDRCRVTSCSCTCGAGAKWCTHVVALCLFRI). A phosphoserine mark is found at serine 437 and serine 564. Disordered regions lie at residues 516–722 (PGAS…VGEE), 800–821 (NPPD…VSTS), and 1018–1216 (SQTH…TVDV). Positions 563–572 (LSAEGGDKAL) are enriched in basic and acidic residues. The segment covering 1021–1042 (HKPQTLSSFYSSSRPATANQRS) has biased composition (polar residues). Gly residues predominate over residues 1121-1132 (SRGGYNGRGWGS). Threonine 1141 is modified (phosphothreonine). Over residues 1146–1161 (IDSSAPETTSDSSPTL) the composition is skewed to polar residues. Residues serine 1155, serine 1158, and serine 1162 each carry the phosphoserine modification. Over residues 1176–1211 (GRGQDSDSISSSSSDSLGSSSSSGSRRASASGGARA) the composition is skewed to low complexity. The residue at position 1270 (serine 1270) is a Phosphoserine. Polar residues predominate over residues 1435–1446 (STAREGATSCSG). Residues 1435-1465 (STAREGATSCSGSGMRAAGEAGRGLPEGRGA) are disordered. Gly residues predominate over residues 1455-1465 (AGRGLPEGRGA). Serine 1831 carries the post-translational modification Phosphoserine.

The protein belongs to the ZSWIM8 family. Component of the SCF-like E3 ubiquitin-protein ligase complex which contains CUL3, RBX1, ELOB, ELOC and ZSWIM8. Interacts with DAB1.

Its subcellular location is the cytoplasm. It is found in the cytosol. Its pathway is protein modification; protein ubiquitination. Its function is as follows. Substrate recognition component of a SCF-like E3 ubiquitin-protein ligase complex that promotes target-directed microRNA degradation (TDMD), a process that mediates degradation of microRNAs (miRNAs). The SCF-like E3 ubiquitin-protein ligase complex acts by catalyzing ubiquitination and subsequent degradation of AGO proteins (AGO1, AGO2, AGO3 and/or AGO4), thereby exposing miRNAs for degradation. Specifically recognizes and binds AGO proteins when they are engaged with a TDMD target. May also acts as a regulator of axon guidance: specifically recognizes misfolded ROBO3 and promotes its ubiquitination and subsequent degradation. Plays an essential role for proper embryonic development of heart and lung. Controls protein quality of DAB1, a key signal molecule for brain development, thus protecting its signaling strength. Mechanistically, recognizes intrinsically disordered regions of DAB1 and eliminates misfolded DAB1 that cannot be properly phosphorylated. This Mus musculus (Mouse) protein is Zinc finger SWIM domain-containing protein 8.